Consider the following 134-residue polypeptide: Transcription antitermination protein NusB (134 aa).

The protein belongs to the NusB family.

Involved in transcription antitermination. Required for transcription of ribosomal RNA (rRNA) genes. Binds specifically to the boxA antiterminator sequence of the ribosomal RNA (rrn) operons. The sequence is that of Transcription antitermination protein NusB from Shewanella sp. (strain W3-18-1).